The following is a 197-amino-acid chain: Lipid A acyltransferase PagP (197 aa).

Positions 1–24 (MMFFKRTILACTVALLFPALPSYA) are cleaved as a signal peptide. Residues histidine 69, aspartate 112, and serine 113 contribute to the active site.

This sequence belongs to the lipid A palmitoyltransferase family. In terms of assembly, homodimer.

It is found in the cell outer membrane. It carries out the reaction a lipid A + a 1,2-diacyl-sn-glycero-3-phosphocholine = a hepta-acyl lipid A + a 2-acyl-sn-glycero-3-phosphocholine. The catalysed reaction is a lipid IVA + a 1,2-diacyl-sn-glycero-3-phosphocholine = a lipid IVB + a 2-acyl-sn-glycero-3-phosphocholine. It catalyses the reaction a lipid IIA + a 1,2-diacyl-sn-glycero-3-phosphocholine = a lipid IIB + a 2-acyl-sn-glycero-3-phosphocholine. Functionally, transfers a fatty acid residue from the sn-1 position of a phospholipid to the N-linked hydroxyfatty acid chain on the proximal unit of lipid A or its precursors. The sequence is that of Lipid A acyltransferase PagP from Serratia proteamaculans (strain 568).